A 1191-amino-acid polypeptide reads, in one-letter code: Protogenin (1191 aa).

The signal sequence occupies residues 1–23 (MAPPVRPGMLPLLLLLLLPPLGS). Ig-like domains follow at residues 24-124 (VPGV…AHLT), 126-216 (STIS…ASLT), 229-316 (PTII…ATLT), and 321-405 (PSFV…ARLT). Topologically, residues 24–943 (VPGVWSFSEL…YYHLDQKSMT (920 aa)) are extracellular. Intrachain disulfides connect C54-C107 and C150-C199. N-linked (GlcNAc...) asparagine glycosylation is present at N237. Intrachain disulfides connect C250–C298 and C342–C389. 5 consecutive Fibronectin type-III domains span residues 415 to 509 (APYN…TLED), 511 to 607 (PLRP…TPKA), 612 to 711 (APKS…VRDR), 718 to 811 (PPHH…TLPE), and 816 to 911 (PPVG…VLPK). An N-linked (GlcNAc...) asparagine glycan is attached at N624. Residues 944 to 964 (GIAVGVGIALTCILICVLILI) form a helical membrane-spanning segment. Residues 965–1191 (YRSKARKSSA…LRYAAEGFPV (227 aa)) lie on the Cytoplasmic side of the membrane. 2 disordered regions span residues 975 to 1010 (SKTAQSGTQPLSQASASVAAGSDMGKNLERATETAE) and 1079 to 1191 (ISDE…GFPV). Residues 977-990 (TAQSGTQPLSQASA) show a composition bias toward polar residues. Residues 1104 to 1132 (DTEHSANSEGSHETGDSGRFSHESNDEIH) are compositionally biased toward basic and acidic residues. 2 stretches are compositionally biased toward polar residues: residues 1135 to 1146 (SVISSTPPTSNP) and 1171 to 1180 (EQTSAPQTSA).

Belongs to the immunoglobulin superfamily. DCC family. From mid-gastrulation to early somite stages, restricted to posterior neural plate and mesoderm with an anterior limit at the level of the rhombencephalon. Posterior restriction is progressively lost during somitogenesis. Expression is maintained in the neural tube and paraxial mesoderm during this process. As development proceeds, further restricted to the dorsal parts of the spinal cord and somites. In parallel, expression progresses caudally during axis elongation.

It is found in the membrane. May play a role in anteroposterior axis elongation. The polypeptide is Protogenin (Mus musculus (Mouse)).